The primary structure comprises 662 residues: LIM domain kinase 1 (662 aa).

LIM zinc-binding domains lie at 24 to 83 (PVCA…RFGE) and 84 to 145 (LCHG…MVVT). The PDZ domain occupies 166-259 (LVSIPACSDG…LLQLTIEHDP (94 aa)). Residues 262 to 328 (PLPRDLALPC…ASQRKDIGRS (67 aa)) are disordered. Over residues 272–287 (SPLPDPHSPLRSPVPA) the composition is skewed to pro residues. The span at 309–320 (SPGSSSVGSPAS) shows a compositional bias: low complexity. The 266-residue stretch at 346-611 (LIHGEVLGKG…PSFSKLEQWL (266 aa)) folds into the Protein kinase domain. ATP is bound by residues 352-360 (LGKGCFGQA) and lysine 375. Residue aspartate 467 is part of the active site.

The protein belongs to the protein kinase superfamily. TKL Ser/Thr protein kinase family. In terms of tissue distribution, expressed predominantly in the brain.

The protein localises to the cytoplasm. It localises to the nucleus. The protein resides in the cytoskeleton. Its subcellular location is the cell projection. It is found in the growth cone. The catalysed reaction is L-seryl-[protein] + ATP = O-phospho-L-seryl-[protein] + ADP + H(+). The enzyme catalyses L-threonyl-[protein] + ATP = O-phospho-L-threonyl-[protein] + ADP + H(+). Functionally, protein kinase which regulates actin filament dynamics. Phosphorylates and inactivates the actin binding/depolymerizing factor cofilin, thereby stabilizing the actin cytoskeleton. Required for motility of the axon growth cone. This Gallus gallus (Chicken) protein is LIM domain kinase 1 (LIMK1).